A 245-amino-acid polypeptide reads, in one-letter code: Uroporphyrinogen-III C-methyltransferase (245 aa).

Residues proline 12, glycine 87–aspartate 89, threonine 117–alanine 118, methionine 168, alanine 197, and alanine 225 contribute to the S-adenosyl-L-homocysteine site.

It belongs to the precorrin methyltransferase family.

The catalysed reaction is uroporphyrinogen III + 2 S-adenosyl-L-methionine = precorrin-2 + 2 S-adenosyl-L-homocysteine + H(+). Its pathway is cofactor biosynthesis; adenosylcobalamin biosynthesis; precorrin-2 from uroporphyrinogen III: step 1/1. It participates in porphyrin-containing compound metabolism; siroheme biosynthesis; precorrin-2 from uroporphyrinogen III: step 1/1. Catalyzes the two successive C-2 and C-7 methylation reactions involved in the conversion of uroporphyrinogen III to precorrin-2 via the intermediate formation of precorrin-1. It is a step in the biosynthesis of both cobalamin (vitamin B12) and siroheme. This chain is Uroporphyrinogen-III C-methyltransferase (cobA), found in Pseudomonas aeruginosa (strain ATCC 15692 / DSM 22644 / CIP 104116 / JCM 14847 / LMG 12228 / 1C / PRS 101 / PAO1).